Reading from the N-terminus, the 77-residue chain is U8-lycotoxin-Ls1v (77 aa).

An N-terminal signal peptide occupies residues 1-20 (MKLIIFTGLVLFGIVSLIEA). A propeptide spanning residues 21–26 (QAENEK) is cleaved from the precursor.

Belongs to the neurotoxin 19 (CSTX) family. 08 (U8-Lctx) subfamily. Contains 4 disulfide bonds. In terms of tissue distribution, expressed by the venom gland.

The protein resides in the secreted. The polypeptide is U8-lycotoxin-Ls1v (Lycosa singoriensis (Wolf spider)).